The chain runs to 84 residues: Small ribosomal subunit protein uS17 (84 aa).

Belongs to the universal ribosomal protein uS17 family. As to quaternary structure, part of the 30S ribosomal subunit.

Functionally, one of the primary rRNA binding proteins, it binds specifically to the 5'-end of 16S ribosomal RNA. This chain is Small ribosomal subunit protein uS17, found in Clostridium perfringens (strain SM101 / Type A).